Reading from the N-terminus, the 224-residue chain is UPF0758 protein Csal_2972 (224 aa).

The region spanning A102–L224 is the MPN domain. Zn(2+)-binding residues include H173, H175, and D186. The JAMM motif signature appears at H173 to D186.

This sequence belongs to the UPF0758 family.

The sequence is that of UPF0758 protein Csal_2972 from Chromohalobacter salexigens (strain ATCC BAA-138 / DSM 3043 / CIP 106854 / NCIMB 13768 / 1H11).